Here is a 250-residue protein sequence, read N- to C-terminus: Triosephosphate isomerase (250 aa).

9–11 (NWK) is a binding site for substrate. Histidine 94 (electrophile) is an active-site residue. The active-site Proton acceptor is glutamate 166. Residues glycine 172, serine 212, and 233–234 (GG) each bind substrate.

The protein belongs to the triosephosphate isomerase family. As to quaternary structure, homodimer.

The protein localises to the cytoplasm. It catalyses the reaction D-glyceraldehyde 3-phosphate = dihydroxyacetone phosphate. It functions in the pathway carbohydrate biosynthesis; gluconeogenesis. The protein operates within carbohydrate degradation; glycolysis; D-glyceraldehyde 3-phosphate from glycerone phosphate: step 1/1. In terms of biological role, involved in the gluconeogenesis. Catalyzes stereospecifically the conversion of dihydroxyacetone phosphate (DHAP) to D-glyceraldehyde-3-phosphate (G3P). This chain is Triosephosphate isomerase, found in Clostridium novyi (strain NT).